Here is a 482-residue protein sequence, read N- to C-terminus: tRNA sulfurtransferase (482 aa).

A THUMP domain is found at 61 to 165; that stretch reads DVTLAVLTQT…NDKLNLIIAR (105 aa). ATP-binding positions include 183 to 184, Lys-265, Gly-287, and Gln-296; that span reads LI. A disulfide bridge connects residues Cys-344 and Cys-456. The Rhodanese domain maps to 404-482; sequence LGSDVVVLDI…GYKNVKVYRP (79 aa). The Cysteine persulfide intermediate role is filled by Cys-456.

The protein belongs to the ThiI family.

It localises to the cytoplasm. The catalysed reaction is [ThiI sulfur-carrier protein]-S-sulfanyl-L-cysteine + a uridine in tRNA + 2 reduced [2Fe-2S]-[ferredoxin] + ATP + H(+) = [ThiI sulfur-carrier protein]-L-cysteine + a 4-thiouridine in tRNA + 2 oxidized [2Fe-2S]-[ferredoxin] + AMP + diphosphate. It catalyses the reaction [ThiS sulfur-carrier protein]-C-terminal Gly-Gly-AMP + S-sulfanyl-L-cysteinyl-[cysteine desulfurase] + AH2 = [ThiS sulfur-carrier protein]-C-terminal-Gly-aminoethanethioate + L-cysteinyl-[cysteine desulfurase] + A + AMP + 2 H(+). The protein operates within cofactor biosynthesis; thiamine diphosphate biosynthesis. Catalyzes the ATP-dependent transfer of a sulfur to tRNA to produce 4-thiouridine in position 8 of tRNAs, which functions as a near-UV photosensor. Also catalyzes the transfer of sulfur to the sulfur carrier protein ThiS, forming ThiS-thiocarboxylate. This is a step in the synthesis of thiazole, in the thiamine biosynthesis pathway. The sulfur is donated as persulfide by IscS. The protein is tRNA sulfurtransferase of Aliivibrio fischeri (strain ATCC 700601 / ES114) (Vibrio fischeri).